A 330-amino-acid polypeptide reads, in one-letter code: Aspartate--ammonia ligase (330 aa).

Belongs to the class-II aminoacyl-tRNA synthetase family. AsnA subfamily.

It is found in the cytoplasm. It carries out the reaction L-aspartate + NH4(+) + ATP = L-asparagine + AMP + diphosphate + H(+). The protein operates within amino-acid biosynthesis; L-asparagine biosynthesis; L-asparagine from L-aspartate (ammonia route): step 1/1. The chain is Aspartate--ammonia ligase from Escherichia coli O139:H28 (strain E24377A / ETEC).